The chain runs to 419 residues: Creatine kinase S-type, mitochondrial (419 aa).

A mitochondrion-targeting transit peptide spans M1–A39. The cardiolipin-binding stretch occupies residues A40–M64. One can recognise a Phosphagen kinase N-terminal domain in the interval K46–N132. The region spanning Y159–L401 is the Phosphagen kinase C-terminal domain. ATP is bound by residues S162–R166 and H225. A Phosphotyrosine modification is found at Y255. ATP contacts are provided by residues R270, R326, R354 to V359, and D369. A Phosphothreonine modification is found at T356.

Belongs to the ATP:guanido phosphotransferase family. Exists as an octamer composed of four CKMT2 homodimers.

It is found in the mitochondrion inner membrane. The enzyme catalyses creatine + ATP = N-phosphocreatine + ADP + H(+). Reversibly catalyzes the transfer of phosphate between ATP and various phosphogens (e.g. creatine phosphate). Creatine kinase isoenzymes play a central role in energy transduction in tissues with large, fluctuating energy demands, such as skeletal muscle, heart, brain and spermatozoa. In Bos taurus (Bovine), this protein is Creatine kinase S-type, mitochondrial (CKMT2).